Here is a 723-residue protein sequence, read N- to C-terminus: Translation initiation factor IF-2 (723 aa).

Residues 112-138 (KIFNNKKNKKQKPQQAPQQEVQKKKEK) form a disordered region. Residues 114 to 123 (FNNKKNKKQK) are compositionally biased toward basic residues. In terms of domain architecture, tr-type G spans 224 to 393 (ERPPVVTIMG…LLVSEMEELK (170 aa)). Positions 233-240 (GHVDHGKT) are G1. 233–240 (GHVDHGKT) contacts GTP. Positions 258–262 (GITQH) are G2. Residues 279–282 (DTPG) form a G3 region. GTP is bound by residues 279–283 (DTPGH) and 333–336 (NKID). The G4 stretch occupies residues 333–336 (NKID). Positions 369–371 (SAL) are G5.

It belongs to the TRAFAC class translation factor GTPase superfamily. Classic translation factor GTPase family. IF-2 subfamily.

Its subcellular location is the cytoplasm. One of the essential components for the initiation of protein synthesis. Protects formylmethionyl-tRNA from spontaneous hydrolysis and promotes its binding to the 30S ribosomal subunits. Also involved in the hydrolysis of GTP during the formation of the 70S ribosomal complex. In Anoxybacillus flavithermus (strain DSM 21510 / WK1), this protein is Translation initiation factor IF-2.